Here is a 142-residue protein sequence, read N- to C-terminus: Large ribosomal subunit protein uL13 (142 aa).

Belongs to the universal ribosomal protein uL13 family. Part of the 50S ribosomal subunit.

In terms of biological role, this protein is one of the early assembly proteins of the 50S ribosomal subunit, although it is not seen to bind rRNA by itself. It is important during the early stages of 50S assembly. The protein is Large ribosomal subunit protein uL13 of Vibrio vulnificus (strain CMCP6).